Reading from the N-terminus, the 116-residue chain is Tyrosine-protein phosphatase 20 (116 aa).

One can recognise a Tyrosine-protein phosphatase domain in the interval 1–116; it reads WMMIVEQKCR…EIGGDAPMVV (116 aa). Substrate is bound at residue D84.

Belongs to the protein-tyrosine phosphatase family.

It carries out the reaction O-phospho-L-tyrosyl-[protein] + H2O = L-tyrosyl-[protein] + phosphate. In Styela plicata (Wrinkled sea squirt), this protein is Tyrosine-protein phosphatase 20 (STY-20).